A 260-amino-acid polypeptide reads, in one-letter code: Adenosylcobinamide-GDP ribazoletransferase (260 aa).

7 helical membrane passes run Pro42–Ile62, Leu64–Leu84, Phe117–Ile137, Tyr144–Trp164, Gly192–Ile212, Ala214–Gly234, and Thr240–Leu260.

The protein belongs to the CobS family. Requires Mg(2+) as cofactor.

The protein localises to the cell inner membrane. It catalyses the reaction alpha-ribazole + adenosylcob(III)inamide-GDP = adenosylcob(III)alamin + GMP + H(+). The catalysed reaction is alpha-ribazole 5'-phosphate + adenosylcob(III)inamide-GDP = adenosylcob(III)alamin 5'-phosphate + GMP + H(+). The protein operates within cofactor biosynthesis; adenosylcobalamin biosynthesis; adenosylcobalamin from cob(II)yrinate a,c-diamide: step 7/7. Its function is as follows. Joins adenosylcobinamide-GDP and alpha-ribazole to generate adenosylcobalamin (Ado-cobalamin). Also synthesizes adenosylcobalamin 5'-phosphate from adenosylcobinamide-GDP and alpha-ribazole 5'-phosphate. The protein is Adenosylcobinamide-GDP ribazoletransferase of Brucella abortus (strain S19).